The chain runs to 229 residues: MTASLARLERKLGYTFKNQDQMLLALTHRSYAGRNNERLEFLGDAILNFVAGEALFERFPQAREGQLSRLRARLVKGETLARLARGFDLGEYLRLGSGELKSGGFRRESILADALEALIGAIYLDADMDTARERVLAWLADEFEGLTLVDTNKDPKTRLQEFLQSRSCELPRYEVVDIQGEPHCRTFFVECEVVLLNNKSRGQGVSRRIAEQVAAASALIALGVENGND.

The RNase III domain maps to 5 to 127 (LARLERKLGY…LIGAIYLDAD (123 aa)). Glutamate 40 is a binding site for Mg(2+). The active site involves aspartate 44. Aspartate 113 and glutamate 116 together coordinate Mg(2+). The active site involves glutamate 116. The DRBM domain maps to 154-224 (DPKTRLQEFL…AASALIALGV (71 aa)).

The protein belongs to the ribonuclease III family. Homodimer. The cofactor is Mg(2+).

The protein localises to the cytoplasm. The enzyme catalyses Endonucleolytic cleavage to 5'-phosphomonoester.. In terms of biological role, digests double-stranded RNA. Involved in the processing of primary rRNA transcript to yield the immediate precursors to the large and small rRNAs (23S and 16S). Processes some mRNAs, and tRNAs when they are encoded in the rRNA operon. Processes pre-crRNA and tracrRNA of type II CRISPR loci if present in the organism. This is Ribonuclease 3 from Pseudomonas putida (strain GB-1).